The sequence spans 287 residues: MTTEENKTSRNRKRKRQRNPKPSKEEPIETTPKNQNEKKNQRDTKNQQHGGSSAPSKRPKPSNFLDALRERLSGGQFRMLNEKLYTCSGKEALDYFKEDPQMFDMYHTGYQQQMSNWPELPVNSIINWLLSNSSSLVVADFGCGDARIAKSVKNKVFSFDLVSKNPSVIACDMSNTSLESSSVDVAVFCLSLMGTNYSSYIKEAHRVLRPSGMLLIAEVKSRFDPNNGGADPKDFVKAVCDLGFTSVLKDFSNKMFILFHFKKKEQMNSNQKIIKWPELKACLYKRR.

Residues 1 to 62 form a disordered region; that stretch reads MTTEENKTSR…SAPSKRPKPS (62 aa). Positions 9-21 are enriched in basic residues; it reads SRNRKRKRQRNPK. The span at 35 to 46 shows a compositional bias: basic and acidic residues; the sequence is QNEKKNQRDTKN. Residues histidine 107, glycine 142, aspartate 160, aspartate 172, methionine 173, and cysteine 189 each coordinate S-adenosyl-L-methionine.

Belongs to the methyltransferase superfamily. RRP8 family.

It localises to the nucleus. The protein localises to the nucleolus. Probable methyltransferase required to silence rDNA. This is Ribosomal RNA-processing protein 8 from Arabidopsis thaliana (Mouse-ear cress).